The chain runs to 562 residues: Putative transport protein YE1478 (562 aa).

Transmembrane regions (helical) follow at residues 8–28, 32–52, 66–86, 94–114, 118–138, and 158–178; these read LLNG…LCLG, LGPI…LLGQ, FMLF…SIFF, MLAL…GKLF, IGLT…LVGA, and NLSL…ILGA. 2 consecutive RCK C-terminal domains span residues 202 to 288 and 290 to 373; these read LDTD…SFRN and KEVF…KIGF. 5 consecutive transmembrane segments (helical) span residues 383–403, 406–426, 447–467, 475–495, and 541–561; these read LLAF…TFQF, FSFG…LGFL, FGLM…INSS, MLIS…IFGA, and IANV…PGIL.

Belongs to the AAE transporter (TC 2.A.81) family. YbjL subfamily.

It localises to the cell membrane. The polypeptide is Putative transport protein YE1478 (Yersinia enterocolitica serotype O:8 / biotype 1B (strain NCTC 13174 / 8081)).